Here is a 197-residue protein sequence, read N- to C-terminus: RNA pyrophosphohydrolase (197 aa).

The Nudix hydrolase domain maps to 6–149 (GYRPNVGIVI…KRDVYRKAMK (144 aa)). The Nudix box signature appears at 38 to 59 (GGINDGETPEQAMYRELYEEVG). The interval 165 to 197 (LSTNNNDEKKANYSAKKPYSPYRNQDKKRKTRV) is disordered.

This sequence belongs to the Nudix hydrolase family. RppH subfamily. Requires a divalent metal cation as cofactor.

Functionally, accelerates the degradation of transcripts by removing pyrophosphate from the 5'-end of triphosphorylated RNA, leading to a more labile monophosphorylated state that can stimulate subsequent ribonuclease cleavage. This Mannheimia succiniciproducens (strain KCTC 0769BP / MBEL55E) protein is RNA pyrophosphohydrolase.